Reading from the N-terminus, the 248-residue chain is MSHQADNKLTLRRDGFTFKQFFVAHDRCAMKVGTDGILLGAWAPLSSVTRILDIGSGSGLLALMLAQRSDTHVRIDAVELDSAASQQAKENISASPWADRIAVYAEDIIDFADTRSADYSLIISNPPYFPPGIACGSAEREQARYTTLLTHETLLRCAHQLLMPDGLFCVVLPIQVAENFIPLAQQHNWYVHQQLRVSEQEDKPAHRVLLALSRQKKECVNASLAIRDEERRYSTAFQQLTKDFYLFM.

This sequence belongs to the methyltransferase superfamily. tRNA (adenine-N(6)-)-methyltransferase family.

The protein resides in the cytoplasm. The catalysed reaction is adenosine(37) in tRNA1(Val) + S-adenosyl-L-methionine = N(6)-methyladenosine(37) in tRNA1(Val) + S-adenosyl-L-homocysteine + H(+). Functionally, specifically methylates the adenine in position 37 of tRNA(1)(Val) (anticodon cmo5UAC). In Pectobacterium carotovorum subsp. carotovorum (strain PC1), this protein is tRNA1(Val) (adenine(37)-N6)-methyltransferase.